Reading from the N-terminus, the 422-residue chain is Histidine--tRNA ligase (422 aa).

Belongs to the class-II aminoacyl-tRNA synthetase family. In terms of assembly, homodimer.

The protein localises to the cytoplasm. It carries out the reaction tRNA(His) + L-histidine + ATP = L-histidyl-tRNA(His) + AMP + diphosphate + H(+). The chain is Histidine--tRNA ligase (hisS) from Photobacterium profundum (strain SS9).